A 325-amino-acid polypeptide reads, in one-letter code: ATP phosphoribosyltransferase (325 aa).

It belongs to the ATP phosphoribosyltransferase family. Long subfamily. It depends on Mg(2+) as a cofactor.

The protein resides in the cytoplasm. The enzyme catalyses 1-(5-phospho-beta-D-ribosyl)-ATP + diphosphate = 5-phospho-alpha-D-ribose 1-diphosphate + ATP. It participates in amino-acid biosynthesis; L-histidine biosynthesis; L-histidine from 5-phospho-alpha-D-ribose 1-diphosphate: step 1/9. Feedback inhibited by histidine. Catalyzes the condensation of ATP and 5-phosphoribose 1-diphosphate to form N'-(5'-phosphoribosyl)-ATP (PR-ATP). Has a crucial role in the pathway because the rate of histidine biosynthesis seems to be controlled primarily by regulation of HisG enzymatic activity. The chain is ATP phosphoribosyltransferase from Rhodopseudomonas palustris (strain BisA53).